The sequence spans 81 residues: Conotoxin Eb11.3 (81 aa).

The signal sequence occupies residues 1 to 23; sequence MMFRLTSVWCLLVIVLLNSAVDG. 4 disulfide bridges follow: C27/C41, C34/C48, C40/C56, and C47/C62. L69 is modified (leucine amide). The propeptide occupies 73-81; the sequence is AQYKRFFRR.

It belongs to the conotoxin I2 superfamily. As to expression, expressed by the venom duct.

It is found in the secreted. The sequence is that of Conotoxin Eb11.3 from Conus eburneus (Ivory cone).